The chain runs to 164 residues: MGDLPGLVRLSIALRIQPNDGPVFYKVDGQRFGQNRTIKLLTGSSYKVEVKIKPSTLQVENISIGGVLVPLELKSKEPDGDRVVYTGTYDTEGVTPTKSGERQPIQITMPFTDIGTFETVWQVKFYNYHKRDHCQWGSPFSVIEYECKPNETRSLMWVNKESFL.

This sequence belongs to the CNRIP family. In terms of assembly, interacts with the cannabinoid receptor CNR1 (via C-terminus). Does not interact with cannabinoid receptor CNR2.

In terms of biological role, suppresses cannabinoid receptor CNR1-mediated tonic inhibition of voltage-gated calcium channels. Functionally, does not suppress cannabinoid receptor CNR1-mediated tonic inhibition of voltage-gated calcium channels. This Homo sapiens (Human) protein is CB1 cannabinoid receptor-interacting protein 1 (CNRIP1).